A 145-amino-acid polypeptide reads, in one-letter code: D-aminoacyl-tRNA deacylase (145 aa).

A Gly-cisPro motif, important for rejection of L-amino acids motif is present at residues 137–138 (GP).

This sequence belongs to the DTD family. In terms of assembly, homodimer.

It localises to the cytoplasm. The catalysed reaction is glycyl-tRNA(Ala) + H2O = tRNA(Ala) + glycine + H(+). It catalyses the reaction a D-aminoacyl-tRNA + H2O = a tRNA + a D-alpha-amino acid + H(+). In terms of biological role, an aminoacyl-tRNA editing enzyme that deacylates mischarged D-aminoacyl-tRNAs. Also deacylates mischarged glycyl-tRNA(Ala), protecting cells against glycine mischarging by AlaRS. Acts via tRNA-based rather than protein-based catalysis; rejects L-amino acids rather than detecting D-amino acids in the active site. By recycling D-aminoacyl-tRNA to D-amino acids and free tRNA molecules, this enzyme counteracts the toxicity associated with the formation of D-aminoacyl-tRNA entities in vivo and helps enforce protein L-homochirality. The chain is D-aminoacyl-tRNA deacylase from Lactobacillus helveticus (strain DPC 4571).